Consider the following 130-residue polypeptide: Arginine decarboxylase proenzyme (130 aa).

S78 acts as the Schiff-base intermediate with substrate; via pyruvic acid in catalysis. Position 78 is a pyruvic acid (Ser); by autocatalysis (S78). H83 acts as the Proton acceptor; for processing activity in catalysis. The active-site Proton donor; for catalytic activity is C98.

This sequence belongs to the prokaryotic AdoMetDC family. Type 1 subfamily. In terms of assembly, heterooctamer of four alpha and four beta chains arranged as a tetramer of alpha/beta heterodimers. Pyruvate serves as cofactor. Is synthesized initially as an inactive proenzyme. Formation of the active enzyme involves a self-maturation process in which the active site pyruvoyl group is generated from an internal serine residue via an autocatalytic post-translational modification. Two non-identical subunits are generated from the proenzyme in this reaction, and the pyruvate is formed at the N-terminus of the alpha chain, which is derived from the carboxyl end of the proenzyme. The post-translation cleavage follows an unusual pathway, termed non-hydrolytic serinolysis, in which the side chain hydroxyl group of the serine supplies its oxygen atom to form the C-terminus of the beta chain, while the remainder of the serine residue undergoes an oxidative deamination to produce ammonia and the pyruvoyl group blocking the N-terminus of the alpha chain.

It catalyses the reaction L-arginine + H(+) = agmatine + CO2. Its pathway is amine and polyamine biosynthesis; agmatine biosynthesis; agmatine from L-arginine: step 1/1. Its function is as follows. Specifically catalyzes the decarboxylation of L-arginine to agmatine. Has no S-adenosylmethionine decarboxylase (AdoMetDC) activity. This Sulfolobus acidocaldarius (strain ATCC 33909 / DSM 639 / JCM 8929 / NBRC 15157 / NCIMB 11770) protein is Arginine decarboxylase proenzyme.